A 748-amino-acid polypeptide reads, in one-letter code: Wings apart-like protein homolog 1 (748 aa).

Disordered stretches follow at residues 23-199 (TLAQ…VYAT) and 614-644 (EGGCGDEEEEEEGGDESSDEDGVRKDGRLDR). The segment covering 35–64 (PSVRSSDSPDVPDTPDVPVNQLSSPPLSLP) has biased composition (low complexity). Composition is skewed to polar residues over residues 68-79 (SEGNAETLQNLS) and 87-96 (LSQSSTSSLN). Low complexity predominate over residues 172 to 182 (ISSSSNRYSSR). Positions 205–723 (KPLASGYGSR…KRLYDFTKAT (519 aa)) constitute a WAPL domain. The span at 616–633 (GCGDEEEEEEGGDESSDE) shows a compositional bias: acidic residues. Positions 634 to 644 (DGVRKDGRLDR) are enriched in basic and acidic residues.

This sequence belongs to the WAPL family.

The protein localises to the nucleus. In terms of biological role, regulator of meiotic chromosome structure and function, playing a role in sister chromatid cohesion, possibly via antagonizing the coh-3/-4 association with axial elements in nuclei during late prophase, cohesin association with chromatin, DNA double strand break repair and polar body positioning following meiotic divisions during oogenesis. Regulates the morphogenesis and temporal assembly of axial elements to control the organization of meiotic chromosomes in pachytene nuclei and is also involved in meiotic chromosomal remodeling in late pachytene nuclei. Required for the removal of the cohesin component scc-1 from mitotic chromosomes. In Caenorhabditis elegans, this protein is Wings apart-like protein homolog 1.